We begin with the raw amino-acid sequence, 533 residues long: Na(+)/H(+) antiporter NhaB (533 aa).

The next 11 helical transmembrane spans lie at 10 to 30, 67 to 87, 98 to 118, 131 to 165, 209 to 229, 247 to 267, 310 to 330, 355 to 375, 396 to 416, 454 to 474, and 481 to 501; these read IGNF…SFLI, PGGL…SQVL, LLLV…LFVF, VSLL…FYSI, LLMH…VGEP, IRMS…CFIV, AFVG…VGLI, EEAL…AVII, LVIF…VFVG, ATPN…APLI, and MVWM…MAIQ.

Belongs to the NhaB Na(+)/H(+) (TC 2.A.34) antiporter family.

The protein localises to the cell inner membrane. The catalysed reaction is 2 Na(+)(in) + 3 H(+)(out) = 2 Na(+)(out) + 3 H(+)(in). Functionally, na(+)/H(+) antiporter that extrudes sodium in exchange for external protons. In Shewanella sp. (strain ANA-3), this protein is Na(+)/H(+) antiporter NhaB.